The chain runs to 376 residues: Succinyl-diaminopimelate desuccinylase (376 aa).

Histidine 67 contacts Zn(2+). Aspartate 69 is a catalytic residue. Aspartate 100 contributes to the Zn(2+) binding site. Residue glutamate 134 is the Proton acceptor of the active site. Residues glutamate 135, glutamate 163, and histidine 349 each coordinate Zn(2+).

Belongs to the peptidase M20A family. DapE subfamily. As to quaternary structure, homodimer. The cofactor is Zn(2+). Co(2+) is required as a cofactor.

It catalyses the reaction N-succinyl-(2S,6S)-2,6-diaminopimelate + H2O = (2S,6S)-2,6-diaminopimelate + succinate. The protein operates within amino-acid biosynthesis; L-lysine biosynthesis via DAP pathway; LL-2,6-diaminopimelate from (S)-tetrahydrodipicolinate (succinylase route): step 3/3. Catalyzes the hydrolysis of N-succinyl-L,L-diaminopimelic acid (SDAP), forming succinate and LL-2,6-diaminopimelate (DAP), an intermediate involved in the bacterial biosynthesis of lysine and meso-diaminopimelic acid, an essential component of bacterial cell walls. The sequence is that of Succinyl-diaminopimelate desuccinylase from Proteus mirabilis (strain HI4320).